We begin with the raw amino-acid sequence, 65 residues long: Large ribosomal subunit protein bL35 (65 aa).

The segment at 1–26 (MPKMKTHRGAAKRFKKTGSGKLKRAK) is disordered.

Belongs to the bacterial ribosomal protein bL35 family.

The sequence is that of Large ribosomal subunit protein bL35 from Clostridium novyi (strain NT).